A 92-amino-acid chain; its full sequence is Small ribosomal subunit protein uS19c (92 aa).

This sequence belongs to the universal ribosomal protein uS19 family.

The protein resides in the plastid. The protein localises to the chloroplast. Protein S19 forms a complex with S13 that binds strongly to the 16S ribosomal RNA. This chain is Small ribosomal subunit protein uS19c, found in Physcomitrium patens (Spreading-leaved earth moss).